We begin with the raw amino-acid sequence, 571 residues long: MRTSQFLLATQKETPSDAVVVSHQLMLRAGMIRKLASGLYTWLPMGLRVLRKVEAIVREEMNAVGALEILMPGIQPAELWQESGRWEQYGPELMRLVDRHNREFCLGPTHEEVITDLARNELNSYKQLPINMYQIQTKFRDEIRPRFGLMRGREFVMKDAYSFHADNASLQVTYDRMHLAYSNVFSRLGLKFRPVEADNGSIGGAGSHEFHVLAESGEDDIVFSNGSDYAANIEKAEAVPREKARAAATEELRLVDTPNAKTIAQLVEGFGLPIEKTVKTLVVHAAEEGKLIALIIRGDHELNEIKASQQELVASPLVMASEAELRDAIGAGAGSLGPLNLPLPCIIDRSVELMSDFAVGANIDDKHYFGVNWERDLPVPTVADLRNVVAGDPSPDGQGTLEIKRGIEVGHIFQLGTKYSEAMKCQVLGENGKPVNLAMGCYGIGVSRVVAAAIEQNSDENGIIWNDTLAPFQIALIPLRYETDAVREATDKLYAELTAAGFEVLLDDRDKKTSPGIKFADMELIGIPHRIVVSDRGLAEGNLEYKSRTESQPQAIAVADVLSFIQGRVKR.

Belongs to the class-II aminoacyl-tRNA synthetase family. ProS type 1 subfamily. As to quaternary structure, homodimer.

It localises to the cytoplasm. The enzyme catalyses tRNA(Pro) + L-proline + ATP = L-prolyl-tRNA(Pro) + AMP + diphosphate. In terms of biological role, catalyzes the attachment of proline to tRNA(Pro) in a two-step reaction: proline is first activated by ATP to form Pro-AMP and then transferred to the acceptor end of tRNA(Pro). As ProRS can inadvertently accommodate and process non-cognate amino acids such as alanine and cysteine, to avoid such errors it has two additional distinct editing activities against alanine. One activity is designated as 'pretransfer' editing and involves the tRNA(Pro)-independent hydrolysis of activated Ala-AMP. The other activity is designated 'posttransfer' editing and involves deacylation of mischarged Ala-tRNA(Pro). The misacylated Cys-tRNA(Pro) is not edited by ProRS. The sequence is that of Proline--tRNA ligase from Pseudomonas syringae pv. tomato (strain ATCC BAA-871 / DC3000).